A 430-amino-acid chain; its full sequence is MGKNVVVLGTQWGDEGKGKIVDLLTEHAAAVVRYQGGHNAGHTLVIDGEKTVLHLIPSGVLREGVQCLIGNGVVVAPDALMREIVKLEEKGVPVRERLRISPSCPLILSYHVALDQAREKARGEQKIGTTGRGIGPAYEDKVARRGLRIGDLFHRERFAAKLGELLDYHNFVLVNYYKEPAIDFQKTLDECMEYAELLKPMMLDVTAELHQLRRAGKDIMFEGAQGSLLDIDHGTYPYVTSSNTTAGGIATGSGVGPMYLDYILGITKAYTTRVGSGPFPTELFDDIGAFLAKRGHEFGATTGRARRCGWFDAVILRRAIDVNSISGLCLTKLDVLDGLETINICVGYKNQDGAVIDAPTDADSYIGLEPVYEQMPGWSESTLGAKTLEELPAAAQAYIKRIEELVGAPIDIISTGPDRNETIVLRHPFA.

GTP-binding positions include 13–19 (GDEGKGK) and 41–43 (GHT). Catalysis depends on Asp14, which acts as the Proton acceptor. Asp14 and Gly41 together coordinate Mg(2+). Residues 14-17 (DEGK), 39-42 (NAGH), Thr130, Arg144, Gln225, Thr240, and Arg304 each bind IMP. His42 serves as the catalytic Proton donor. Substrate is bound at residue 300 to 306 (ATTGRAR). Residues Arg306, 332–334 (KLD), and 414–416 (STG) each bind GTP.

This sequence belongs to the adenylosuccinate synthetase family. Homodimer. It depends on Mg(2+) as a cofactor.

The protein localises to the cytoplasm. The enzyme catalyses IMP + L-aspartate + GTP = N(6)-(1,2-dicarboxyethyl)-AMP + GDP + phosphate + 2 H(+). It functions in the pathway purine metabolism; AMP biosynthesis via de novo pathway; AMP from IMP: step 1/2. Its function is as follows. Plays an important role in the de novo pathway of purine nucleotide biosynthesis. Catalyzes the first committed step in the biosynthesis of AMP from IMP. The polypeptide is Adenylosuccinate synthetase (Pseudomonas fluorescens (strain ATCC BAA-477 / NRRL B-23932 / Pf-5)).